The following is a 104-amino-acid chain: Small ribosomal subunit protein uS10 (104 aa).

The protein belongs to the universal ribosomal protein uS10 family. Part of the 30S ribosomal subunit.

Functionally, involved in the binding of tRNA to the ribosomes. The chain is Small ribosomal subunit protein uS10 from Maricaulis maris (strain MCS10) (Caulobacter maris).